The primary structure comprises 335 residues: Sphingomyelinase C (335 aa).

The signal sequence occupies residues 1–28 (MEKFKIIKTIPKICGAFIFLLFFTFLFG).

Belongs to the neutral sphingomyelinase family.

The protein resides in the secreted. The enzyme catalyses a sphingomyelin + H2O = phosphocholine + an N-acylsphing-4-enine + H(+). Functionally, virulence factor that promotes intracellular proliferation by mediating the disruption of the phagocytic vacuole and the release of bacteria into the host cell cytosol. May act in concert with the phospholipases PlcA and PlcB and the hemolysin hly to mediate efficient escape from the vacuole. This Listeria ivanovii protein is Sphingomyelinase C (smcL).